Consider the following 284-residue polypeptide: Acetyl-coenzyme A carboxylase carboxyl transferase subunit beta (284 aa).

The CoA carboxyltransferase N-terminal domain occupies 27–284; that stretch reads LMTKCPSCKY…ELHDGGVRHV (258 aa). Zn(2+) contacts are provided by Cys-31, Cys-34, Cys-50, and Cys-52. Residues 31–52 form a C4-type zinc finger; that stretch reads CPSCKYMHYTKQLNENHKVCDC.

The protein belongs to the AccD/PCCB family. In terms of assembly, acetyl-CoA carboxylase is a heterohexamer composed of biotin carboxyl carrier protein (AccB), biotin carboxylase (AccC) and two subunits each of ACCase subunit alpha (AccA) and ACCase subunit beta (AccD). The cofactor is Zn(2+).

The protein resides in the cytoplasm. It catalyses the reaction N(6)-carboxybiotinyl-L-lysyl-[protein] + acetyl-CoA = N(6)-biotinyl-L-lysyl-[protein] + malonyl-CoA. It functions in the pathway lipid metabolism; malonyl-CoA biosynthesis; malonyl-CoA from acetyl-CoA: step 1/1. In terms of biological role, component of the acetyl coenzyme A carboxylase (ACC) complex. Biotin carboxylase (BC) catalyzes the carboxylation of biotin on its carrier protein (BCCP) and then the CO(2) group is transferred by the transcarboxylase to acetyl-CoA to form malonyl-CoA. The polypeptide is Acetyl-coenzyme A carboxylase carboxyl transferase subunit beta (Exiguobacterium sp. (strain ATCC BAA-1283 / AT1b)).